Consider the following 197-residue polypeptide: tRNA(Phe) 7-((3-amino-3-carboxypropyl)-4-demethylwyosine(37)-N(4))-methyltransferase (197 aa).

It belongs to the TYW3 family.

The enzyme catalyses 4-demethyl-7-[(3S)-3-amino-3-carboxypropyl]wyosine(37) in tRNA(Phe) + S-adenosyl-L-methionine = 7-[(3S)-3-amino-3-carboxypropyl]wyosine(37) in tRNA(Phe) + S-adenosyl-L-homocysteine + H(+). S-adenosyl-L-methionine-dependent methyltransferase that acts as a component of the wyosine derivatives biosynthesis pathway. Probably methylates N-4 position of wybutosine-86 to produce wybutosine-72. The chain is tRNA(Phe) 7-((3-amino-3-carboxypropyl)-4-demethylwyosine(37)-N(4))-methyltransferase from Thermococcus sibiricus (strain DSM 12597 / MM 739).